The primary structure comprises 586 residues: Asparagine synthetase [glutamine-hydrolyzing] (586 aa).

C2 acts as the For GATase activity in catalysis. The region spanning 2–185 (CGILAVLGCS…PGHLYSSKSG (184 aa)) is the Glutamine amidotransferase type-2 domain. Residues 50–54 (RLAII), 75–77 (NGE), and D98 each bind L-glutamine. The Asparagine synthetase domain occupies 194 to 517 (PPWFNESVPS…PQNSARLTVP (324 aa)). ATP is bound by residues L232, V268, and 342–343 (SG).

Belongs to the asparagine synthetase family.

The catalysed reaction is L-aspartate + L-glutamine + ATP + H2O = L-asparagine + L-glutamate + AMP + diphosphate + H(+). Its pathway is amino-acid biosynthesis; L-asparagine biosynthesis; L-asparagine from L-aspartate (L-Gln route): step 1/1. The protein is Asparagine synthetase [glutamine-hydrolyzing] of Brassica oleracea (Wild cabbage).